Reading from the N-terminus, the 488-residue chain is Ribulose bisphosphate carboxylase large chain (488 aa).

N127 and T177 together coordinate substrate. The Proton acceptor role is filled by K179. K181 serves as a coordination point for substrate. 3 residues coordinate Mg(2+): K205, D207, and E208. Position 205 is an N6-carboxylysine (K205). H297 serves as the catalytic Proton acceptor. 3 residues coordinate substrate: R298, H330, and S382.

It belongs to the RuBisCO large chain family. Type I subfamily. In terms of assembly, heterohexadecamer of 8 large chains and 8 small chains. Mg(2+) is required as a cofactor.

It is found in the plastid. Its subcellular location is the chloroplast. It catalyses the reaction 2 (2R)-3-phosphoglycerate + 2 H(+) = D-ribulose 1,5-bisphosphate + CO2 + H2O. The enzyme catalyses D-ribulose 1,5-bisphosphate + O2 = 2-phosphoglycolate + (2R)-3-phosphoglycerate + 2 H(+). Its function is as follows. RuBisCO catalyzes two reactions: the carboxylation of D-ribulose 1,5-bisphosphate, the primary event in carbon dioxide fixation, as well as the oxidative fragmentation of the pentose substrate in the photorespiration process. Both reactions occur simultaneously and in competition at the same active site. The protein is Ribulose bisphosphate carboxylase large chain of Emiliania huxleyi (Coccolithophore).